A 331-amino-acid polypeptide reads, in one-letter code: Homoarginine-6-hydroxylase 2-ODD-C23 (331 aa).

Residues 182–289 (PFWVMRLIGY…RVSVVYFYET (108 aa)) enclose the Fe2OG dioxygenase domain. Fe cation is bound by residues His212, Asp214, and His270. Arg280 provides a ligand contact to 2-oxoglutarate.

The protein belongs to the iron/ascorbate-dependent oxidoreductase family. Fe(2+) is required as a cofactor.

It is found in the cytoplasm. The protein resides in the cytosol. It carries out the reaction L-homoarginine + 2-oxoglutarate + O2 = 6-hydroxy-L-homoarginine + succinate + CO2. Its function is as follows. 2-oxoglutarate-dependent dioxygenase catalyzing homoarginine 6-hydroxylation thus producing 6-hydroxy-L-homoarginine. Guanidine (Gd) is in turn synthesized by the spontaneous conversion of 6-hydroxy-L-homoarginine to (S)-2-amino-6-oxohexanoate (RHEA:79843); guanidine is a nitrogen-rich compound that can serve as a defense or signaling substance. This is Homoarginine-6-hydroxylase 2-ODD-C23 from Glycine max (Soybean).